Consider the following 159-residue polypeptide: Large ribosomal subunit protein uL10 (159 aa).

The protein belongs to the universal ribosomal protein uL10 family. As to quaternary structure, part of the ribosomal stalk of the 50S ribosomal subunit. The N-terminus interacts with L11 and the large rRNA to form the base of the stalk. The C-terminus forms an elongated spine to which L12 dimers bind in a sequential fashion forming a multimeric L10(L12)X complex.

Functionally, forms part of the ribosomal stalk, playing a central role in the interaction of the ribosome with GTP-bound translation factors. In Campylobacter jejuni subsp. jejuni serotype O:2 (strain ATCC 700819 / NCTC 11168), this protein is Large ribosomal subunit protein uL10 (rplJ).